The primary structure comprises 545 residues: CTP synthase (545 aa).

The interval 1–266 (MTTKYIFVTG…DSYFTERFGL (266 aa)) is amidoligase domain. Residue Ser-14 coordinates CTP. Residue Ser-14 coordinates UTP. Residues 15 to 20 (SLGKGI) and Asp-72 contribute to the ATP site. Residues Asp-72 and Glu-140 each coordinate Mg(2+). CTP contacts are provided by residues 147–149 (DIE), 187–192 (KTKPTQ), and Lys-223. UTP contacts are provided by residues 187 to 192 (KTKPTQ) and Lys-223. An ATP-binding site is contributed by 239–241 (KDV). Residues 291 to 542 (TIGMVGKYVS…VKAAGEYQKR (252 aa)) enclose the Glutamine amidotransferase type-1 domain. Gly-352 serves as a coordination point for L-glutamine. Cys-379 acts as the Nucleophile; for glutamine hydrolysis in catalysis. Residues 380-383 (LGMQ), Glu-403, and Arg-470 each bind L-glutamine. Catalysis depends on residues His-515 and Glu-517.

Belongs to the CTP synthase family. In terms of assembly, homotetramer.

It carries out the reaction UTP + L-glutamine + ATP + H2O = CTP + L-glutamate + ADP + phosphate + 2 H(+). It catalyses the reaction L-glutamine + H2O = L-glutamate + NH4(+). The enzyme catalyses UTP + NH4(+) + ATP = CTP + ADP + phosphate + 2 H(+). The protein operates within pyrimidine metabolism; CTP biosynthesis via de novo pathway; CTP from UDP: step 2/2. Its activity is regulated as follows. Allosterically activated by GTP, when glutamine is the substrate; GTP has no effect on the reaction when ammonia is the substrate. The allosteric effector GTP functions by stabilizing the protein conformation that binds the tetrahedral intermediate(s) formed during glutamine hydrolysis. Inhibited by the product CTP, via allosteric rather than competitive inhibition. In terms of biological role, catalyzes the ATP-dependent amination of UTP to CTP with either L-glutamine or ammonia as the source of nitrogen. Regulates intracellular CTP levels through interactions with the four ribonucleotide triphosphates. In Aeromonas hydrophila subsp. hydrophila (strain ATCC 7966 / DSM 30187 / BCRC 13018 / CCUG 14551 / JCM 1027 / KCTC 2358 / NCIMB 9240 / NCTC 8049), this protein is CTP synthase.